Reading from the N-terminus, the 695-residue chain is Elongation factor G (695 aa).

In terms of domain architecture, tr-type G spans 10-285 (AKTRNIGIMA…AVIDYLPSPI (276 aa)). GTP contacts are provided by residues 19-26 (AHIDAGKT), 83-87 (DTPGH), and 137-140 (NKMD).

The protein belongs to the TRAFAC class translation factor GTPase superfamily. Classic translation factor GTPase family. EF-G/EF-2 subfamily.

It is found in the cytoplasm. Catalyzes the GTP-dependent ribosomal translocation step during translation elongation. During this step, the ribosome changes from the pre-translocational (PRE) to the post-translocational (POST) state as the newly formed A-site-bound peptidyl-tRNA and P-site-bound deacylated tRNA move to the P and E sites, respectively. Catalyzes the coordinated movement of the two tRNA molecules, the mRNA and conformational changes in the ribosome. The polypeptide is Elongation factor G (Limosilactobacillus reuteri (strain DSM 20016) (Lactobacillus reuteri)).